A 551-amino-acid chain; its full sequence is Formate--tetrahydrofolate ligase (551 aa).

Thr54–Thr61 is a binding site for ATP.

Belongs to the formate--tetrahydrofolate ligase family.

It carries out the reaction (6S)-5,6,7,8-tetrahydrofolate + formate + ATP = (6R)-10-formyltetrahydrofolate + ADP + phosphate. It functions in the pathway one-carbon metabolism; tetrahydrofolate interconversion. The sequence is that of Formate--tetrahydrofolate ligase from Myxococcus xanthus (strain DK1622).